Reading from the N-terminus, the 238-residue chain is Neuromodulin (238 aa).

Residues 1-238 form a disordered region; that stretch reads MLCCMRRTKQ…EEPEADQEHA (238 aa). S-palmitoyl cysteine attachment occurs at residues C3 and C4. Over residues 9-32 the composition is skewed to basic and acidic residues; the sequence is KQVEKNDDDQKIEQDGIKPEDKAH. One can recognise an IQ domain in the interval 31–60; that stretch reads AHKAATKIQASFRGHITRKKLKGEKKDDVQ. S41 carries the phosphoserine; by PHK and PKC modification. Basic and acidic residues predominate over residues 54–83; sequence EKKDDVQAAEAEANKKDEAPVADGVEKKGE. Residues 84–95 are compositionally biased toward low complexity; it reads GTTTAEAAPATG. Residues 97 to 116 show a composition bias toward basic and acidic residues; it reads KPDEPGKAGETPSEEKKGEG. A compositionally biased stretch (low complexity) spans 119–130; that stretch reads ATEQAAPQAPAS. Over residues 139–154 the composition is skewed to polar residues; that stretch reads ETESATKASTDNSPSS. A phosphoserine mark is found at S151, S153, and S154. A compositionally biased stretch (basic and acidic residues) spans 155–167; it reads KAEDAPAKEEPKQ. The segment covering 168–199 has biased composition (low complexity); sequence ADVPAAVTAAAATTPAAEDAAAKATAQPPTET. Position 181 is a phosphothreonine (T181). S202 and S203 each carry phosphoserine; by CK2. The span at 213–225 shows a compositional bias: basic and acidic residues; sequence DETKPKESARQDE. The span at 226-238 shows a compositional bias: acidic residues; sequence GKEEEPEADQEHA.

Belongs to the neuromodulin family. In terms of assembly, identified in a complex containing FGFR4, NCAM1, CDH2, PLCG1, FRS2, SRC, SHC1, GAP43 and CTTN. Interacts (via IQ domain) with calmodulin. Binds calmodulin with a greater affinity in the absence of Ca(2+) than in its presence. In terms of processing, phosphorylated. Phosphorylation of this protein by a protein kinase C is specifically correlated with certain forms of synaptic plasticity. Post-translationally, palmitoylated by ZDHHC3. Palmitoylation is regulated by ARF6 and is essential for plasma membrane association and axonal and dendritic filopodia induction. Deacylated by LYPLA2.

It is found in the cell membrane. It localises to the cell projection. The protein resides in the growth cone membrane. The protein localises to the synapse. Its subcellular location is the filopodium membrane. It is found in the perikaryon. It localises to the dendrite. The protein resides in the axon. The protein localises to the cytoplasm. This protein is associated with nerve growth. It is a major component of the motile 'growth cones' that form the tips of elongating axons. Plays a role in axonal and dendritic filopodia induction. The protein is Neuromodulin (GAP43) of Homo sapiens (Human).